Consider the following 440-residue polypeptide: tRNA (guanine(37)-N(1))-methyltransferase (440 aa).

S-adenosyl-L-methionine is bound by residues histidine 217, 255 to 256 (DL), 283 to 284 (DG), and asparagine 315.

Belongs to the class I-like SAM-binding methyltransferase superfamily. TRM5/TYW2 family. Monomer.

Its subcellular location is the mitochondrion matrix. The protein resides in the nucleus. It localises to the cytoplasm. The enzyme catalyses guanosine(37) in tRNA + S-adenosyl-L-methionine = N(1)-methylguanosine(37) in tRNA + S-adenosyl-L-homocysteine + H(+). Its function is as follows. Specifically methylates the N1 position of guanosine-37 in various cytoplasmic and mitochondrial tRNAs. Methylation is not dependent on the nature of the nucleoside 5' of the target nucleoside. This is the first step in the biosynthesis of wybutosine (yW), a modified base adjacent to the anticodon of tRNAs and required for accurate decoding. The chain is tRNA (guanine(37)-N(1))-methyltransferase from Drosophila pseudoobscura pseudoobscura (Fruit fly).